We begin with the raw amino-acid sequence, 347 residues long: NADH-ubiquinone oxidoreductase chain 2 (347 aa).

11 helical membrane passes run 3–23, 25–45, 59–79, 96–116, 122–142, 153–173, 178–198, 200–220, 237–257, 274–294, and 325–345; these read PPIL…VLTS, HWML…PILM, YFLM…INLL, TLMT…FWVP, ISLS…LSVL, LLLL…LNQT, ILAY…IYNP, MMLL…MLFM, MPLI…LPPL, EMII…YFYM, and FLPP…IISI.

Belongs to the complex I subunit 2 family. Core subunit of respiratory chain NADH dehydrogenase (Complex I) which is composed of 45 different subunits. Interacts with TMEM242.

The protein resides in the mitochondrion inner membrane. The enzyme catalyses a ubiquinone + NADH + 5 H(+)(in) = a ubiquinol + NAD(+) + 4 H(+)(out). Core subunit of the mitochondrial membrane respiratory chain NADH dehydrogenase (Complex I) which catalyzes electron transfer from NADH through the respiratory chain, using ubiquinone as an electron acceptor. Essential for the catalytic activity and assembly of complex I. In Paradoxurus hermaphroditus (Asian palm civet), this protein is NADH-ubiquinone oxidoreductase chain 2.